The following is a 644-amino-acid chain: Exoribonuclease 2 (644 aa).

An RNB domain is found at 189 to 516 (REDLTALNFV…NHRLLKAVIT (328 aa)). The S1 motif domain maps to 561–643 (DIRFNAEIID…ETRGIVAKPA (83 aa)).

Belongs to the RNR ribonuclease family. RNase II subfamily.

Its subcellular location is the cytoplasm. It catalyses the reaction Exonucleolytic cleavage in the 3'- to 5'-direction to yield nucleoside 5'-phosphates.. In terms of biological role, involved in mRNA degradation. Hydrolyzes single-stranded polyribonucleotides processively in the 3' to 5' direction. This Pectobacterium atrosepticum (strain SCRI 1043 / ATCC BAA-672) (Erwinia carotovora subsp. atroseptica) protein is Exoribonuclease 2.